The sequence spans 433 residues: Phosphomethylpyrimidine synthase 1 (433 aa).

Residues Asn-66, Met-94, Tyr-123, His-162, 184 to 186 (SRG), 225 to 228 (DALR), and Glu-264 contribute to the substrate site. A Zn(2+)-binding site is contributed by His-268. Tyr-291 is a substrate binding site. Position 332 (His-332) interacts with Zn(2+). [4Fe-4S] cluster-binding residues include Cys-408, Cys-411, and Cys-415.

It belongs to the ThiC family. Requires [4Fe-4S] cluster as cofactor.

It carries out the reaction 5-amino-1-(5-phospho-beta-D-ribosyl)imidazole + S-adenosyl-L-methionine = 4-amino-2-methyl-5-(phosphooxymethyl)pyrimidine + CO + 5'-deoxyadenosine + formate + L-methionine + 3 H(+). Its pathway is cofactor biosynthesis; thiamine diphosphate biosynthesis. In terms of biological role, catalyzes the synthesis of the hydroxymethylpyrimidine phosphate (HMP-P) moiety of thiamine from aminoimidazole ribotide (AIR) in a radical S-adenosyl-L-methionine (SAM)-dependent reaction. In Saccharolobus solfataricus (strain ATCC 35092 / DSM 1617 / JCM 11322 / P2) (Sulfolobus solfataricus), this protein is Phosphomethylpyrimidine synthase 1.